A 351-amino-acid chain; its full sequence is Xaa-Pro dipeptidase (351 aa).

The Co(2+) site is built by D212, D223, H287, E316, and E330.

It belongs to the peptidase M24B family. Archaeal-type prolidase subfamily. As to quaternary structure, homodimer. Co(2+) serves as cofactor.

It is found in the cytoplasm. It carries out the reaction Xaa-L-Pro dipeptide + H2O = an L-alpha-amino acid + L-proline. Its function is as follows. Splits dipeptides with a prolyl in the C-terminal position and a nonpolar amino acid at the N-terminal position. The sequence is that of Xaa-Pro dipeptidase (pepQ) from Pyrococcus horikoshii (strain ATCC 700860 / DSM 12428 / JCM 9974 / NBRC 100139 / OT-3).